The sequence spans 327 residues: Immunodominant envelope protein p35 (327 aa).

Positions 41 to 69 (KNGYDDYRDPPSPKPLPKSKQEPNADDKV) are disordered. The span at 59-69 (SKQEPNADDKV) shows a compositional bias: basic and acidic residues. The helical transmembrane segment at 291–311 (ITMMFLIAIVIIIGLAIFDIN) threads the bilayer.

This sequence belongs to the poxviruses protein p35 family.

Its subcellular location is the virion membrane. In terms of biological role, envelope protein that binds to the cell surface to provide virion attachment to target cell. The chain is Immunodominant envelope protein p35 from Fowlpox virus (strain NVSL) (FPV).